Consider the following 251-residue polypeptide: UPF0246 protein PEPE_1842 (251 aa).

It belongs to the UPF0246 family.

This is UPF0246 protein PEPE_1842 from Pediococcus pentosaceus (strain ATCC 25745 / CCUG 21536 / LMG 10740 / 183-1w).